We begin with the raw amino-acid sequence, 329 residues long: Fructose-1,6-bisphosphatase class 1 (329 aa).

Mg(2+) contacts are provided by glutamate 84, aspartate 103, leucine 105, and aspartate 106. Residues 106 to 109, asparagine 196, and lysine 262 each bind substrate; that span reads DGSS. Glutamate 268 provides a ligand contact to Mg(2+).

This sequence belongs to the FBPase class 1 family. In terms of assembly, homotetramer. Mg(2+) serves as cofactor.

Its subcellular location is the cytoplasm. It catalyses the reaction beta-D-fructose 1,6-bisphosphate + H2O = beta-D-fructose 6-phosphate + phosphate. Its pathway is carbohydrate biosynthesis; gluconeogenesis. This Shewanella loihica (strain ATCC BAA-1088 / PV-4) protein is Fructose-1,6-bisphosphatase class 1.